We begin with the raw amino-acid sequence, 559 residues long: Potassium-transporting ATPase potassium-binding subunit (559 aa).

12 helical membrane passes run 6-26 (FLLI…LGNV), 63-83 (LLAI…MLML), 131-151 (VGLT…IFAL), 173-193 (ITLW…IQQG), 253-273 (FVQM…FGDV), 283-303 (LLWA…WAEW), 327-347 (FGIL…CGAV), 356-376 (ALGG…FGGV), 379-399 (GLYG…LMIG), 416-436 (LTAL…ALAL), 484-504 (LLAF…MAIA), and 524-544 (GALF…LTFI).

This sequence belongs to the KdpA family. As to quaternary structure, the system is composed of three essential subunits: KdpA, KdpB and KdpC.

It is found in the cell inner membrane. Part of the high-affinity ATP-driven potassium transport (or Kdp) system, which catalyzes the hydrolysis of ATP coupled with the electrogenic transport of potassium into the cytoplasm. This subunit binds the periplasmic potassium ions and delivers the ions to the membrane domain of KdpB through an intramembrane tunnel. This Enterobacter sp. (strain 638) protein is Potassium-transporting ATPase potassium-binding subunit.